The primary structure comprises 90 residues: Co-chaperonin GroES (90 aa).

The protein belongs to the GroES chaperonin family. As to quaternary structure, heptamer of 7 subunits arranged in a ring. Interacts with the chaperonin GroEL.

The protein localises to the cytoplasm. Its function is as follows. Together with the chaperonin GroEL, plays an essential role in assisting protein folding. The GroEL-GroES system forms a nano-cage that allows encapsulation of the non-native substrate proteins and provides a physical environment optimized to promote and accelerate protein folding. GroES binds to the apical surface of the GroEL ring, thereby capping the opening of the GroEL channel. This Borreliella burgdorferi (strain ATCC 35210 / DSM 4680 / CIP 102532 / B31) (Borrelia burgdorferi) protein is Co-chaperonin GroES.